Consider the following 320-residue polypeptide: uncharacterized protein (320 aa).

46-53 (DVPGVGKT) is an ATP binding site.

This sequence belongs to the MoxR family.

This is an uncharacterized protein from Bacillus subtilis (strain 168).